The following is a 212-amino-acid chain: Dephospho-CoA kinase (212 aa).

Residues 3–204 (ILGLTGSIGM…GSRPAAPVGG (202 aa)) form the DPCK domain. 11–16 (GMGKST) serves as a coordination point for ATP.

This sequence belongs to the CoaE family.

Its subcellular location is the cytoplasm. It carries out the reaction 3'-dephospho-CoA + ATP = ADP + CoA + H(+). It participates in cofactor biosynthesis; coenzyme A biosynthesis; CoA from (R)-pantothenate: step 5/5. Its function is as follows. Catalyzes the phosphorylation of the 3'-hydroxyl group of dephosphocoenzyme A to form coenzyme A. This chain is Dephospho-CoA kinase, found in Paramagnetospirillum magneticum (strain ATCC 700264 / AMB-1) (Magnetospirillum magneticum).